Here is a 368-residue protein sequence, read N- to C-terminus: Probable staphylococcal-like nuclease CAN2 (368 aa).

G2 is lipidated: N-myristoyl glycine. The S-palmitoyl cysteine moiety is linked to residue C7. A disordered region spans residues 16-56 (DHYPYYKPTSRPHYQPPHYHGQPAAPPAPLQQQHLGPHGVT). Residues 27–38 (PHYQPPHYHGQP) are compositionally biased toward low complexity. One can recognise a TNase-like domain in the interval 168 to 344 (NTLPVYDKCI…RAANRGLWAS (177 aa)). D181 is a binding site for Ca(2+). Residue R251 is part of the active site. Position 256 (D256) interacts with Ca(2+). Active-site residues include E259 and R293.

The protein belongs to the thermonuclease family. Ca(2+) is required as a cofactor.

The protein localises to the cell membrane. Enzyme that catalyzes the hydrolysis of both DNA and RNA at the 5' position of the phosphodiester bond. This is Probable staphylococcal-like nuclease CAN2 from Oryza sativa subsp. japonica (Rice).